A 160-amino-acid chain; its full sequence is UPF0262 protein Mmar10_1128 (160 aa).

The protein belongs to the UPF0262 family.

The polypeptide is UPF0262 protein Mmar10_1128 (Maricaulis maris (strain MCS10) (Caulobacter maris)).